We begin with the raw amino-acid sequence, 407 residues long: tRNA(Ile2) 2-agmatinylcytidine synthetase TiaS (407 aa).

Belongs to the TiaS family.

Its subcellular location is the cytoplasm. It catalyses the reaction cytidine(34) in tRNA(Ile2) + agmatine + ATP + H2O = 2-agmatinylcytidine(34) in tRNA(Ile2) + AMP + 2 phosphate + 2 H(+). Functionally, ATP-dependent agmatine transferase that catalyzes the formation of 2-agmatinylcytidine (agm2C) at the wobble position (C34) of tRNA(Ile2), converting the codon specificity from AUG to AUA. In Caldivirga maquilingensis (strain ATCC 700844 / DSM 13496 / JCM 10307 / IC-167), this protein is tRNA(Ile2) 2-agmatinylcytidine synthetase TiaS.